Reading from the N-terminus, the 468-residue chain is Secreted triacylglycerol lipase LIP2 (468 aa).

The first 22 residues, 1 to 22 (MFGFRLFILAAVALAYIQCAAA), serve as a signal peptide directing secretion. A disulfide bond links Cys-125 and Cys-295. Ser-209 serves as the catalytic Nucleophile. N-linked (GlcNAc...) asparagine glycans are attached at residues Asn-242, Asn-252, and Asn-279. Residues Asp-355 and His-389 contribute to the active site.

Belongs to the AB hydrolase superfamily. Lipase family. Class Lip subfamily.

Its subcellular location is the secreted. The enzyme catalyses a triacylglycerol + H2O = a diacylglycerol + a fatty acid + H(+). The catalysed reaction is a monoacylglycerol + H2O = glycerol + a fatty acid + H(+). It catalyses the reaction a diacylglycerol + H2O = a monoacylglycerol + a fatty acid + H(+). Functionally, secreted lipase that hydrolyzes acylglycerol lipids such as triacylglycerols and consequently releases free fatty acid. Due to an absence of fatty acid synthase genes in Malassezia species, secretory lipases are essential for the yeast to generate free fatty acids from degradation of sebum and assimilate them as lipid sources for growth. Plays important roles not only in lipid metabolism but also in the immune response of host cells and pathogenesis. This chain is Secreted triacylglycerol lipase LIP2, found in Malassezia furfur (Pityriasis versicolor infection agent).